A 200-amino-acid chain; its full sequence is Small ribosomal subunit protein uS4 (200 aa).

Residues 92–155 form the S4 RNA-binding domain; sequence SRLDAVVYSL…QNLDIIKESV (64 aa).

The protein belongs to the universal ribosomal protein uS4 family. Part of the 30S ribosomal subunit. Contacts protein S5. The interaction surface between S4 and S5 is involved in control of translational fidelity.

Functionally, one of the primary rRNA binding proteins, it binds directly to 16S rRNA where it nucleates assembly of the body of the 30S subunit. In terms of biological role, with S5 and S12 plays an important role in translational accuracy. The chain is Small ribosomal subunit protein uS4 from Staphylococcus haemolyticus (strain JCSC1435).